The primary structure comprises 211 residues: Thymidylate kinase (211 aa).

Residue 10 to 17 (GGDGVGKS) coordinates ATP.

It belongs to the thymidylate kinase family.

It carries out the reaction dTMP + ATP = dTDP + ADP. In terms of biological role, phosphorylation of dTMP to form dTDP in both de novo and salvage pathways of dTTP synthesis. This is Thymidylate kinase from Clavibacter michiganensis subsp. michiganensis (strain NCPPB 382).